A 430-amino-acid chain; its full sequence is 3-phosphoshikimate 1-carboxyvinyltransferase (430 aa).

3 residues coordinate 3-phosphoshikimate: lysine 25, serine 26, and arginine 30. Phosphoenolpyruvate is bound at residue lysine 25. Residues glycine 97 and arginine 125 each coordinate phosphoenolpyruvate. Residues serine 170, glutamine 172, aspartate 318, and lysine 345 each coordinate 3-phosphoshikimate. Glutamine 172 serves as a coordination point for phosphoenolpyruvate. Residue aspartate 318 is the Proton acceptor of the active site. Positions 349 and 391 each coordinate phosphoenolpyruvate.

Belongs to the EPSP synthase family. As to quaternary structure, monomer.

The protein resides in the cytoplasm. It catalyses the reaction 3-phosphoshikimate + phosphoenolpyruvate = 5-O-(1-carboxyvinyl)-3-phosphoshikimate + phosphate. Its pathway is metabolic intermediate biosynthesis; chorismate biosynthesis; chorismate from D-erythrose 4-phosphate and phosphoenolpyruvate: step 6/7. Its function is as follows. Catalyzes the transfer of the enolpyruvyl moiety of phosphoenolpyruvate (PEP) to the 5-hydroxyl of shikimate-3-phosphate (S3P) to produce enolpyruvyl shikimate-3-phosphate and inorganic phosphate. The polypeptide is 3-phosphoshikimate 1-carboxyvinyltransferase (Shouchella clausii (strain KSM-K16) (Alkalihalobacillus clausii)).